Here is an 873-residue protein sequence, read N- to C-terminus: Leucine--tRNA ligase (873 aa).

Positions 48-58 (PYPSGKLHMGH) match the 'HIGH' region motif. Residues 636 to 640 (KMSKS) carry the 'KMSKS' region motif. K639 is an ATP binding site.

The protein belongs to the class-I aminoacyl-tRNA synthetase family.

Its subcellular location is the cytoplasm. The enzyme catalyses tRNA(Leu) + L-leucine + ATP = L-leucyl-tRNA(Leu) + AMP + diphosphate. The protein is Leucine--tRNA ligase of Cupriavidus pinatubonensis (strain JMP 134 / LMG 1197) (Cupriavidus necator (strain JMP 134)).